Here is a 293-residue protein sequence, read N- to C-terminus: Fructose-bisphosphate aldolase (293 aa).

Ser-50 contacts D-glyceraldehyde 3-phosphate. Residue Asp-85 is the Proton donor of the active site. The Zn(2+) site is built by His-86, Asp-106, Glu-136, and His-178. Gly-179 provides a ligand contact to dihydroxyacetone phosphate. His-208 is a Zn(2+) binding site. Residues 209 to 211 and 230 to 233 each bind dihydroxyacetone phosphate; these read GGS and NVNT.

It belongs to the class II fructose-bisphosphate aldolase family. Zn(2+) serves as cofactor.

The catalysed reaction is beta-D-fructose 1,6-bisphosphate = D-glyceraldehyde 3-phosphate + dihydroxyacetone phosphate. It participates in carbohydrate degradation; glycolysis; D-glyceraldehyde 3-phosphate and glycerone phosphate from D-glucose: step 4/4. Functionally, catalyzes the aldol condensation of dihydroxyacetone phosphate (DHAP or glycerone-phosphate) with glyceraldehyde 3-phosphate (G3P) to form fructose 1,6-bisphosphate (FBP) in gluconeogenesis and the reverse reaction in glycolysis. The polypeptide is Fructose-bisphosphate aldolase (fba) (Streptococcus pyogenes serotype M1).